A 178-amino-acid polypeptide reads, in one-letter code: Cytidylate kinase (178 aa).

Position 7–15 (7–15) interacts with ATP; sequence GLPGSGTTS.

The protein belongs to the cytidylate kinase family. Type 2 subfamily.

The protein localises to the cytoplasm. It catalyses the reaction CMP + ATP = CDP + ADP. The catalysed reaction is dCMP + ATP = dCDP + ADP. In Methanospirillum hungatei JF-1 (strain ATCC 27890 / DSM 864 / NBRC 100397 / JF-1), this protein is Cytidylate kinase.